A 166-amino-acid chain; its full sequence is Cyclic pyranopterin monophosphate synthase (166 aa).

Residues 83–85 and 121–122 each bind substrate; these read LCH and ME. Aspartate 136 is a catalytic residue.

This sequence belongs to the MoaC family. In terms of assembly, homohexamer; trimer of dimers.

The enzyme catalyses (8S)-3',8-cyclo-7,8-dihydroguanosine 5'-triphosphate = cyclic pyranopterin phosphate + diphosphate. Its pathway is cofactor biosynthesis; molybdopterin biosynthesis. Catalyzes the conversion of (8S)-3',8-cyclo-7,8-dihydroguanosine 5'-triphosphate to cyclic pyranopterin monophosphate (cPMP). The polypeptide is Cyclic pyranopterin monophosphate synthase (Trichodesmium erythraeum (strain IMS101)).